The primary structure comprises 276 residues: Bis(5'-nucleosyl)-tetraphosphatase, symmetrical (276 aa).

Belongs to the Ap4A hydrolase family.

It carries out the reaction P(1),P(4)-bis(5'-adenosyl) tetraphosphate + H2O = 2 ADP + 2 H(+). Hydrolyzes diadenosine 5',5'''-P1,P4-tetraphosphate to yield ADP. In Psychromonas ingrahamii (strain DSM 17664 / CCUG 51855 / 37), this protein is Bis(5'-nucleosyl)-tetraphosphatase, symmetrical.